Reading from the N-terminus, the 132-residue chain is Large-conductance mechanosensitive channel (132 aa).

Transmembrane regions (helical) follow at residues V14–L34, I38–T58, and F69–V89.

This sequence belongs to the MscL family. As to quaternary structure, homopentamer.

The protein resides in the cell membrane. In terms of biological role, channel that opens in response to stretch forces in the membrane lipid bilayer. May participate in the regulation of osmotic pressure changes within the cell. This chain is Large-conductance mechanosensitive channel, found in Bacillus thuringiensis (strain Al Hakam).